We begin with the raw amino-acid sequence, 315 residues long: Bifunctional pinoresinol-lariciresinol reductase (315 aa).

NADP(+) is bound by residues 14–20 (GGTGYLG), Arg39, and Lys48. Residue Lys142 is the Proton acceptor of the active site. NADP(+) is bound at residue Arg146. His274 lines the substrate pocket.

Belongs to the NmrA-type oxidoreductase family. Isoflavone reductase subfamily. In terms of assembly, dimer.

It catalyses the reaction (+)-lariciresinol + NADP(+) = (+)-pinoresinol + NADPH + H(+). It carries out the reaction (-)-secoisolariciresinol + NADP(+) = (+)-lariciresinol + NADPH + H(+). Its function is as follows. Reductase involved in lignan (-)-hinokinin biosynthesis. Catalyzes the enantioselective conversion of (+)-pinoresinol into (+)-lariciresinol and of (+)-lariciresinol into (-)-secoisolariciresinol. Abstracts the 4R-hydride from the NADPH cofactor during catalysis. Has also a low phenylcoumaran benzylic ether reductase activity. This Linum corymbulosum (Linum) protein is Bifunctional pinoresinol-lariciresinol reductase (PLR_Lc1).